The following is a 469-amino-acid chain: Glutamate-1-semialdehyde 2,1-aminomutase, chloroplastic (469 aa).

A chloroplast-targeting transit peptide spans M1–A34. The residue at position 309 (K309) is an N6-(pyridoxal phosphate)lysine.

Belongs to the class-III pyridoxal-phosphate-dependent aminotransferase family. HemL subfamily. Homodimer. Pyridoxal 5'-phosphate serves as cofactor.

It is found in the plastid. The protein localises to the chloroplast. The enzyme catalyses (S)-4-amino-5-oxopentanoate = 5-aminolevulinate. It functions in the pathway porphyrin-containing compound metabolism; protoporphyrin-IX biosynthesis; 5-aminolevulinate from L-glutamyl-tRNA(Glu): step 2/2. It participates in porphyrin-containing compound metabolism; chlorophyll biosynthesis. The protein is Glutamate-1-semialdehyde 2,1-aminomutase, chloroplastic (GSA) of Hordeum vulgare (Barley).